The primary structure comprises 210 residues: Cell division protein SepF (210 aa).

The protein belongs to the SepF family. Homodimer. Interacts with FtsZ.

The protein localises to the cytoplasm. Functionally, cell division protein that is part of the divisome complex and is recruited early to the Z-ring. Probably stimulates Z-ring formation, perhaps through the cross-linking of FtsZ protofilaments. Its function overlaps with FtsA. The sequence is that of Cell division protein SepF from Mycobacterium leprae (strain Br4923).